A 387-amino-acid polypeptide reads, in one-letter code: Succinate--CoA ligase [ADP-forming] subunit beta (387 aa).

Positions 9–244 constitute an ATP-grasp domain; that stretch reads KAIFADNGIP…ITEENPAERE (236 aa). Residues Lys-46, 53 to 55, Glu-99, Ala-102, and Glu-107 each bind ATP; that span reads GRG. Residues Asn-199 and Asp-213 each coordinate Mg(2+). Substrate contacts are provided by residues Asn-264 and 321 to 323; that span reads GIV.

This sequence belongs to the succinate/malate CoA ligase beta subunit family. In terms of assembly, heterotetramer of two alpha and two beta subunits. Mg(2+) is required as a cofactor.

The enzyme catalyses succinate + ATP + CoA = succinyl-CoA + ADP + phosphate. It carries out the reaction GTP + succinate + CoA = succinyl-CoA + GDP + phosphate. Its pathway is carbohydrate metabolism; tricarboxylic acid cycle; succinate from succinyl-CoA (ligase route): step 1/1. Succinyl-CoA synthetase functions in the citric acid cycle (TCA), coupling the hydrolysis of succinyl-CoA to the synthesis of either ATP or GTP and thus represents the only step of substrate-level phosphorylation in the TCA. The beta subunit provides nucleotide specificity of the enzyme and binds the substrate succinate, while the binding sites for coenzyme A and phosphate are found in the alpha subunit. This chain is Succinate--CoA ligase [ADP-forming] subunit beta, found in Campylobacter jejuni subsp. jejuni serotype O:6 (strain 81116 / NCTC 11828).